Here is a 125-residue protein sequence, read N- to C-terminus: Small ribosomal subunit protein uS13 (125 aa).

The interval 95–125 is disordered; that stretch reads GLPVRGQRTKNNCRTRKGKRKTVANKKKATK.

The protein belongs to the universal ribosomal protein uS13 family. As to quaternary structure, part of the 30S ribosomal subunit. Forms a loose heterodimer with protein S19. Forms two bridges to the 50S subunit in the 70S ribosome.

Located at the top of the head of the 30S subunit, it contacts several helices of the 16S rRNA. In the 70S ribosome it contacts the 23S rRNA (bridge B1a) and protein L5 of the 50S subunit (bridge B1b), connecting the 2 subunits; these bridges are implicated in subunit movement. Contacts the tRNAs in the A and P-sites. This is Small ribosomal subunit protein uS13 from Cytophaga hutchinsonii (strain ATCC 33406 / DSM 1761 / CIP 103989 / NBRC 15051 / NCIMB 9469 / D465).